The primary structure comprises 120 residues: Purkinje cell protein 2 (120 aa).

2 consecutive GoLoco domains span residues 7 to 29 (QEGF…RCSL) and 47 to 69 (MDNL…RVTV). A disordered region spans residues 16–120 (HVQGDRMEEQ…SSPQPQTQAP (105 aa)). Residues 108–120 (RRNSSPQPQTQAP) are compositionally biased toward polar residues. Position 111 is a phosphoserine (serine 111).

Cerebellum (Purkinje cells) and retinal bipolar neurons.

Functionally, may function as a cell-type specific modulator for G protein-mediated cell signaling. The polypeptide is Purkinje cell protein 2 (Pcp2) (Mus musculus (Mouse)).